Consider the following 498-residue polypeptide: ATP synthase subunit beta, chloroplastic (498 aa).

172-179 (GGAGVGKT) provides a ligand contact to ATP.

The protein belongs to the ATPase alpha/beta chains family. As to quaternary structure, F-type ATPases have 2 components, CF(1) - the catalytic core - and CF(0) - the membrane proton channel. CF(1) has five subunits: alpha(3), beta(3), gamma(1), delta(1), epsilon(1). CF(0) has four main subunits: a(1), b(1), b'(1) and c(9-12).

It localises to the plastid. The protein resides in the chloroplast thylakoid membrane. The catalysed reaction is ATP + H2O + 4 H(+)(in) = ADP + phosphate + 5 H(+)(out). Its function is as follows. Produces ATP from ADP in the presence of a proton gradient across the membrane. The catalytic sites are hosted primarily by the beta subunits. The chain is ATP synthase subunit beta, chloroplastic from Carica papaya (Papaya).